The sequence spans 323 residues: tRNA dimethylallyltransferase (323 aa).

12-19 (GPTAAGKT) provides a ligand contact to ATP. 14–19 (TAAGKT) is a substrate binding site. Interaction with substrate tRNA stretches follow at residues 37–40 (DSAL) and 161–165 (QRLIR).

It belongs to the IPP transferase family. In terms of assembly, monomer. Mg(2+) is required as a cofactor.

The catalysed reaction is adenosine(37) in tRNA + dimethylallyl diphosphate = N(6)-dimethylallyladenosine(37) in tRNA + diphosphate. In terms of biological role, catalyzes the transfer of a dimethylallyl group onto the adenine at position 37 in tRNAs that read codons beginning with uridine, leading to the formation of N6-(dimethylallyl)adenosine (i(6)A). This Pseudomonas putida (strain W619) protein is tRNA dimethylallyltransferase.